A 937-amino-acid polypeptide reads, in one-letter code: Protocadherin alpha-7 (937 aa).

An N-terminal signal peptide occupies residues 1 to 29; the sequence is MVNLRGYNWKSQQLLLFLIIVAAWEAGSG. The Extracellular segment spans residues 30-697; sequence QLHYSVPEEA…RVDQRLVDVN (668 aa). Cadherin domains follow at residues 34–133, 157–242, 243–350, 351–455, 456–565, and 587–682; these read SVPE…PPMF, ASDA…APVF, DRSL…APQL, TVSS…APLF, AQPE…APTL, and PGQV…SSKV. The cysteines at positions 96 and 102 are disulfide-linked. O-linked (Man) threonine glycans are attached at residues T223 and T225. N257 and N265 each carry an N-linked (GlcNAc...) asparagine glycan. T438 carries O-linked (Man) threonine glycosylation. S478 is a glycosylation site (O-linked (Man) serine). Residue N548 is glycosylated (N-linked (GlcNAc...) asparagine). Residues 698 to 718 form a helical membrane-spanning segment; it reads VYLIIAICAVSSLLVLTLLLY. Topologically, residues 719–937 are cytoplasmic; the sequence is TALRCSATPT…GNSTTDNSDQ (219 aa). 2 disordered regions span residues 755–794 and 816–843; these read RQRV…PDWR and RAGP…EVSP. 5 PXXP repeats span residues 774 to 777, 786 to 789, 819 to 822, 860 to 863, and 878 to 881; these read PSLP, PRQP, PGGP, PGNP, and PGSP. Residues 774–881 form a 5 X 4 AA repeats of P-X-X-P region; sequence PSLPQGPSST…PDKFIIPGSP (108 aa). The span at 775-787 shows a compositional bias: polar residues; the sequence is SLPQGPSSTDNPR. Positions 887–937 are disordered; sequence RQEPANNQIDKSDFITFGKKEETKKKKKKKKGNKTQEKKEKGNSTTDNSDQ. Over residues 896-910 the composition is skewed to basic and acidic residues; that stretch reads DKSDFITFGKKEETK.

As to quaternary structure, forms homodimers in trans (molecules expressed by two different cells). Forms promiscuous heterodimers in cis (at the plasma membrane of the same cell) with other protocadherins.

The protein localises to the cell membrane. In terms of biological role, calcium-dependent cell-adhesion protein involved in cells self-recognition and non-self discrimination. Thereby, it is involved in the establishment and maintenance of specific neuronal connections in the brain. The sequence is that of Protocadherin alpha-7 from Mus musculus (Mouse).